The sequence spans 385 residues: Nuclear hormone receptor family member nhr-68 (385 aa).

The nuclear receptor DNA-binding region spans 4–79; sequence KEVCLVCQDF…VGMDKTSLQA (76 aa). NR C4-type zinc fingers lie at residues 7-27 and 43-62; these read CLVCQDFSSGYHYGIPSCNGC and CQFDQNCPVDKSIRCACRFC. A disordered region spans residues 81-110; that stretch reads RDPIGYTKRNKKTLRHPMNELSGDESNSCT. Residues 145–384 enclose the NR LBD domain; that stretch reads PKRSLKQALC…SFAKELIFGD (240 aa). The tract at residues 373–384 is AF-2; it reads FTSFAKELIFGD.

Belongs to the nuclear hormone receptor family.

Its subcellular location is the nucleus. Probable transcription factor that acts in a feed-forward loop with nhr-10 to activate genes, including itself, involved in the vitamin B12-independent breakdown of the short-chain fatty acid propionate. This pathway is triggered in response to a diet low in vitamin B12, when canonical vitamin B12-dependent propionate breakdown cannot function; the resulting accumulation of propionate is probably sensed by nhr-68 and/or nhr-10. The protein is Nuclear hormone receptor family member nhr-68 of Caenorhabditis elegans.